We begin with the raw amino-acid sequence, 1820 residues long: Kinesin-like protein KIF20B (1820 aa).

The Kinesin motor domain maps to 58-479; that stretch reads YLQVCLRIRP…LKFSAIAQKV (422 aa). 152 to 159 is a binding site for ATP; the sequence is GLTNSGKT. The residue at position 488 (Ser488) is a Phosphoserine. Coiled coils occupy residues 523-603 and 674-793; these read ENSL…KIRE and GFED…MENT. Thr560 carries the phosphothreonine modification. Residues 829-866 are disordered; the sequence is SERKRVNENELQQDEPPAKKGSIHVSSAITEDQKKSEE. Position 997 is a phosphoserine (Ser997). The segment at 1050-1107 is necessary and sufficient for interaction with SHTN1; the sequence is ENSFHSSIEAIWEECKEIVKASSKKSHQIEELEQQIEKLQAEVKGYKDENNRLKEKEH. Residues 1247–1264 are compositionally biased toward basic and acidic residues; it reads EEEEETNRQETEKLKEEL. The interval 1247–1275 is disordered; sequence EEEEETNRQETEKLKEELSASSARTQNLK. Residues 1265 to 1274 show a composition bias toward polar residues; it reads SASSARTQNL. Residues 1560–1820 are interaction with PIN1; sequence IETQIMDIKP…KRRLRTKTAK (261 aa). At Ser1588 the chain carries Phosphoserine. Residue Thr1644 is modified to Phosphothreonine; by CDK1. Residues Ser1658, Ser1715, and Ser1740 each carry the phosphoserine modification. Residues 1760-1772 are compositionally biased toward polar residues; that stretch reads LSNVEASKENVSQ. Residues 1760-1781 are disordered; it reads LSNVEASKENVSQPKRAKRKLY.

This sequence belongs to the TRAFAC class myosin-kinesin ATPase superfamily. Kinesin family. Oligomerizes (via kinesin motor domain). Associates with microtubules. Interacts (via C-terminal globular tail region) with PIN1 (via WW domain). Interacts with PRC1. Interacts with SHTN1 (via N-terminus); the interaction is direct and promotes the association of SHTN1 to microtubules in primary neurons. In terms of processing, phosphorylated during mitosis by CDK1. Brain, ovary, kidney and testis (at protein level). Overexpressed in bladder cancer cells (at protein level). Expressed in testis. Overexpressed in bladder cancer cells.

It is found in the nucleus. It localises to the cytoplasm. The protein localises to the cytoskeleton. The protein resides in the microtubule organizing center. Its subcellular location is the centrosome. It is found in the nucleolus. It localises to the nucleoplasm. The protein localises to the spindle. The protein resides in the spindle pole. Its subcellular location is the midbody. It is found in the cell projection. It localises to the axon. The protein localises to the growth cone. Functionally, plus-end-directed motor enzyme that is required for completion of cytokinesis. Required for proper midbody organization and abscission in polarized cortical stem cells. Plays a role in the regulation of neuronal polarization by mediating the transport of specific cargos. Participates in the mobilization of SHTN1 and in the accumulation of PIP3 in the growth cone of primary hippocampal neurons in a tubulin and actin-dependent manner. In the developing telencephalon, cooperates with SHTN1 to promote both the transition from the multipolar to the bipolar stage and the radial migration of cortical neurons from the ventricular zone toward the superficial layer of the neocortex. Involved in cerebral cortex growth. Acts as an oncogene for promoting bladder cancer cells proliferation, apoptosis inhibition and carcinogenic progression. This Homo sapiens (Human) protein is Kinesin-like protein KIF20B.